The sequence spans 185 residues: Ribosome-recycling factor (185 aa).

Belongs to the RRF family.

The protein resides in the cytoplasm. Its function is as follows. Responsible for the release of ribosomes from messenger RNA at the termination of protein biosynthesis. May increase the efficiency of translation by recycling ribosomes from one round of translation to another. This chain is Ribosome-recycling factor, found in Wigglesworthia glossinidia brevipalpis.